We begin with the raw amino-acid sequence, 414 residues long: Glucose-1-phosphate adenylyltransferase (414 aa).

Residues Tyr99, Gly164, 181 to 182, and Ser199 each bind alpha-D-glucose 1-phosphate; that span reads EK.

It belongs to the bacterial/plant glucose-1-phosphate adenylyltransferase family. Homotetramer.

The enzyme catalyses alpha-D-glucose 1-phosphate + ATP + H(+) = ADP-alpha-D-glucose + diphosphate. Its pathway is glycan biosynthesis; glycogen biosynthesis. Involved in the biosynthesis of ADP-glucose, a building block required for the elongation reactions to produce glycogen. Catalyzes the reaction between ATP and alpha-D-glucose 1-phosphate (G1P) to produce pyrophosphate and ADP-Glc. The protein is Glucose-1-phosphate adenylyltransferase of Bifidobacterium longum (strain DJO10A).